The following is a 366-amino-acid chain: GTP cyclohydrolase 1 type 2 homolog (366 aa).

Positions 64, 65, 102, 326, and 329 each coordinate Zn(2+).

It belongs to the GTP cyclohydrolase I type 2/NIF3 family. As to quaternary structure, homohexamer.

The sequence is that of GTP cyclohydrolase 1 type 2 homolog from Staphylococcus aureus (strain MSSA476).